Reading from the N-terminus, the 706-residue chain is Zinc finger CCCH domain-containing protein 56 (706 aa).

ANK repeat units lie at residues 83-113 (EQRT…ELNL) and 118-150 (DKST…DPNI). A compositionally biased stretch (low complexity) spans 211-221 (SSLLSLDSVSS). Residues 211–235 (SSLLSLDSVSSPTKPHGTDVTFASE) are disordered. 2 C3H1-type zinc fingers span residues 302 to 324 (PCPD…HGVF) and 332 to 356 (QYRT…HANE). 3 disordered regions span residues 396–427 (PSAA…QQNI), 545–616 (SPKN…QTHG), and 652–692 (QMLK…TRES). 2 stretches are compositionally biased toward polar residues: residues 397 to 427 (SAAQ…QQNI) and 545 to 560 (SPKN…QASS). Ser568 carries the post-translational modification Phosphoserine. Over residues 580 to 592 (SRSLSSRDFGSSL) the composition is skewed to low complexity. 3 stretches are compositionally biased toward polar residues: residues 600-616 (DSGS…QTHG), 652-667 (QMLK…NRVV), and 677-686 (QGGSSVNPHN).

This chain is Zinc finger CCCH domain-containing protein 56, found in Arabidopsis thaliana (Mouse-ear cress).